Reading from the N-terminus, the 196-residue chain is Heat shock protein beta-8 (196 aa).

Residues Met1–Ser28 are disordered. Phosphoserine is present on residues Ser24 and Ser57. Thr63 is modified (phosphothreonine). Arg71 and Arg78 each carry asymmetric dimethylarginine. In terms of domain architecture, sHSP spans Thr74–Glu185. The segment at Pro176 to Ser196 is disordered. Positions Gly178 to Ser196 are enriched in polar residues.

This sequence belongs to the small heat shock protein (HSP20) family. In terms of assembly, monomer. Forms a ternary complex with BAG3 and HSPA1A. Component of the chaperone-assisted selective autophagy (CASA) complex consisting of BAG3, HSPA8/HSC70, HSPB8 and STUB1/CHIP. Interacts with HSPB1. Interacts with DNAJB6. Interacts with BAG3. Post-translationally, phosphorylated.

The protein localises to the cytoplasm. Its subcellular location is the nucleus. Its function is as follows. Involved in the chaperone-assisted selective autophagy (CASA), a crucial process for protein quality control, particularly in mechanical strained cells and tissues such as muscle. Displays temperature-dependent chaperone activity. This is Heat shock protein beta-8 (Hspb8) from Rattus norvegicus (Rat).